Here is a 131-residue protein sequence, read N- to C-terminus: D-ribose pyranase (131 aa).

The active-site Proton donor is His-20. Residues Asp-28, His-98, and Tyr-120 to Asn-122 contribute to the substrate site.

This sequence belongs to the RbsD / FucU family. RbsD subfamily. Homodecamer.

The protein localises to the cytoplasm. It catalyses the reaction beta-D-ribopyranose = beta-D-ribofuranose. The protein operates within carbohydrate metabolism; D-ribose degradation; D-ribose 5-phosphate from beta-D-ribopyranose: step 1/2. Its function is as follows. Catalyzes the interconversion of beta-pyran and beta-furan forms of D-ribose. The sequence is that of D-ribose pyranase from Bacillus cereus (strain ATCC 14579 / DSM 31 / CCUG 7414 / JCM 2152 / NBRC 15305 / NCIMB 9373 / NCTC 2599 / NRRL B-3711).